The sequence spans 344 residues: Nicotinate-nucleotide--dimethylbenzimidazole phosphoribosyltransferase (344 aa).

Glu305 acts as the Proton acceptor in catalysis.

This sequence belongs to the CobT family.

It carries out the reaction 5,6-dimethylbenzimidazole + nicotinate beta-D-ribonucleotide = alpha-ribazole 5'-phosphate + nicotinate + H(+). It participates in nucleoside biosynthesis; alpha-ribazole biosynthesis; alpha-ribazole from 5,6-dimethylbenzimidazole: step 1/2. Catalyzes the synthesis of alpha-ribazole-5'-phosphate from nicotinate mononucleotide (NAMN) and 5,6-dimethylbenzimidazole (DMB). The sequence is that of Nicotinate-nucleotide--dimethylbenzimidazole phosphoribosyltransferase from Agrobacterium fabrum (strain C58 / ATCC 33970) (Agrobacterium tumefaciens (strain C58)).